Reading from the N-terminus, the 696-residue chain is MPDLLLELRSEEIPARMQRRAAEDLKKLVTDALVERGFLYEGAKAFATPRRLALHVAGLPARGEAVREERRGPRVGAPEAAVQGFLKSAGLASLDQATTVTDPKKGEFYLAVIERPGRETLDVLAEILPGIIKSFPWPKSMRWGAASAQPGSLRWVRPLQSIVATFGPETETPEVVPFSVDGITAGMVTSGHRFLAPEPFEVRRFDDYVQALERADVILDADRRKDIILHDAKDLAFARGLDLVEDEGLLEEVAGLVERPVVLMGSFEERFLEIPAEAIRATIRANQKCFVLRKSGSDELAPAFVLVSNLIASDGGAAITAGNERVVRARLSDARFFWETDKATKLEDRLPKLDSIVFHEKLGTQGERVARIAALAAEIAPLVAADPALAERAARLAKADLVTEMVGEFPELQGLMGRKYAALQGEHDSVAAAIEEHYKPVGPSDRVPTDPVSIAVALADKLDTLVGFWAIDEKPTGSKDPYALRRAALGVIRAVIERSLRLSLASLLKGRFVSGSDERTADLLAFFADRLKVYLRDQGARHDLIDAVFALPGQDDLLMVVRRVEALGAFLATDDGKNLLAGYKRAANILRIEEKKDGRAYDEAPDAALAASGQPEERALAEALAAARQEASAAVAAEDFAGAMRALSRLRAPVDAFFEKVTVNADDPALRKNRLLLLNALRAATREVADFSRIEG.

Belongs to the class-II aminoacyl-tRNA synthetase family. In terms of assembly, tetramer of two alpha and two beta subunits.

It localises to the cytoplasm. The enzyme catalyses tRNA(Gly) + glycine + ATP = glycyl-tRNA(Gly) + AMP + diphosphate. This chain is Glycine--tRNA ligase beta subunit, found in Methylorubrum extorquens (strain CM4 / NCIMB 13688) (Methylobacterium extorquens).